The following is a 422-amino-acid chain: Serine hydroxymethyltransferase (422 aa).

(6S)-5,6,7,8-tetrahydrofolate-binding positions include Leu-118 and 122 to 124 (GHL). The residue at position 227 (Lys-227) is an N6-(pyridoxal phosphate)lysine. (6S)-5,6,7,8-tetrahydrofolate is bound by residues Glu-243 and 351 to 353 (SPF).

The protein belongs to the SHMT family. Homodimer. Pyridoxal 5'-phosphate is required as a cofactor.

The protein resides in the cytoplasm. The enzyme catalyses (6R)-5,10-methylene-5,6,7,8-tetrahydrofolate + glycine + H2O = (6S)-5,6,7,8-tetrahydrofolate + L-serine. The protein operates within one-carbon metabolism; tetrahydrofolate interconversion. Its pathway is amino-acid biosynthesis; glycine biosynthesis; glycine from L-serine: step 1/1. In terms of biological role, catalyzes the reversible interconversion of serine and glycine with tetrahydrofolate (THF) serving as the one-carbon carrier. This reaction serves as the major source of one-carbon groups required for the biosynthesis of purines, thymidylate, methionine, and other important biomolecules. Also exhibits THF-independent aldolase activity toward beta-hydroxyamino acids, producing glycine and aldehydes, via a retro-aldol mechanism. The chain is Serine hydroxymethyltransferase from Fervidobacterium nodosum (strain ATCC 35602 / DSM 5306 / Rt17-B1).